The following is a 62-amino-acid chain: Large ribosomal subunit protein bL28 (62 aa).

The protein belongs to the bacterial ribosomal protein bL28 family.

This chain is Large ribosomal subunit protein bL28, found in Thermoanaerobacter pseudethanolicus (strain ATCC 33223 / 39E) (Clostridium thermohydrosulfuricum).